A 31-amino-acid chain; its full sequence is Cytochrome b6-f complex subunit 6 (31 aa).

The helical transmembrane segment at 4–26 (LTSYFGFLLAALTITSALFIGLS) threads the bilayer.

This sequence belongs to the PetL family. In terms of assembly, the 4 large subunits of the cytochrome b6-f complex are cytochrome b6, subunit IV (17 kDa polypeptide, PetD), cytochrome f and the Rieske protein, while the 4 small subunits are PetG, PetL, PetM and PetN. The complex functions as a dimer.

It is found in the plastid. The protein localises to the chloroplast thylakoid membrane. Component of the cytochrome b6-f complex, which mediates electron transfer between photosystem II (PSII) and photosystem I (PSI), cyclic electron flow around PSI, and state transitions. PetL is important for photoautotrophic growth as well as for electron transfer efficiency and stability of the cytochrome b6-f complex. This chain is Cytochrome b6-f complex subunit 6, found in Aethionema cordifolium (Lebanon stonecress).